Here is a 378-residue protein sequence, read N- to C-terminus: Probable mannosyltransferase MNT3 (378 aa).

Topologically, residues 1–4 (MLWH) are cytoplasmic. Residues 5 to 25 (LVFILIAILLLTFSPKIESLF) form a helical; Signal-anchor for type II membrane protein membrane-spanning segment. At 26–378 (KSFTINKPTK…TNHFLNILHN (353 aa)) the chain is on the lumenal side. N-linked (GlcNAc...) asparagine glycosylation is found at asparagine 73 and asparagine 149.

It belongs to the glycosyltransferase 15 family.

The protein localises to the membrane. Functionally, transfers an alpha-D-mannosyl residue from GDP-mannose into lipid-linked oligosaccharide, forming an alpha-(1-&gt;2)-D-mannosyl-D-mannose linkage. This chain is Probable mannosyltransferase MNT3 (MNT3), found in Candida albicans (strain SC5314 / ATCC MYA-2876) (Yeast).